Reading from the N-terminus, the 447-residue chain is Glutamyl-tRNA(Gln) amidotransferase subunit A (447 aa).

Active-site charge relay system residues include Lys51 and Ser126. Ser150 (acyl-ester intermediate) is an active-site residue.

It belongs to the amidase family. GatA subfamily. In terms of assembly, heterotrimer of A, B and C subunits.

It catalyses the reaction L-glutamyl-tRNA(Gln) + L-glutamine + ATP + H2O = L-glutaminyl-tRNA(Gln) + L-glutamate + ADP + phosphate + H(+). Functionally, allows the formation of correctly charged Gln-tRNA(Gln) through the transamidation of misacylated Glu-tRNA(Gln) in organisms which lack glutaminyl-tRNA synthetase. The reaction takes place in the presence of glutamine and ATP through an activated gamma-phospho-Glu-tRNA(Gln). In Helicobacter hepaticus (strain ATCC 51449 / 3B1), this protein is Glutamyl-tRNA(Gln) amidotransferase subunit A.